The primary structure comprises 389 residues: Serpin B13 (389 aa).

It belongs to the serpin family. Ov-serpin subfamily.

Its subcellular location is the cytoplasm. In terms of biological role, may play a role in the proliferation or differentiation of keratinocytes. The sequence is that of Serpin B13 (Serpinb13) from Mus musculus (Mouse).